Reading from the N-terminus, the 169-residue chain is Crossover junction endodeoxyribonuclease RuvC (169 aa).

Catalysis depends on residues aspartate 11, glutamate 71, and aspartate 143. Residues aspartate 11, glutamate 71, and aspartate 143 each contribute to the Mg(2+) site.

The protein belongs to the RuvC family. Homodimer which binds Holliday junction (HJ) DNA. The HJ becomes 2-fold symmetrical on binding to RuvC with unstacked arms; it has a different conformation from HJ DNA in complex with RuvA. In the full resolvosome a probable DNA-RuvA(4)-RuvB(12)-RuvC(2) complex forms which resolves the HJ. The cofactor is Mg(2+).

It is found in the cytoplasm. It catalyses the reaction Endonucleolytic cleavage at a junction such as a reciprocal single-stranded crossover between two homologous DNA duplexes (Holliday junction).. Its function is as follows. The RuvA-RuvB-RuvC complex processes Holliday junction (HJ) DNA during genetic recombination and DNA repair. Endonuclease that resolves HJ intermediates. Cleaves cruciform DNA by making single-stranded nicks across the HJ at symmetrical positions within the homologous arms, yielding a 5'-phosphate and a 3'-hydroxyl group; requires a central core of homology in the junction. The consensus cleavage sequence is 5'-(A/T)TT(C/G)-3'. Cleavage occurs on the 3'-side of the TT dinucleotide at the point of strand exchange. HJ branch migration catalyzed by RuvA-RuvB allows RuvC to scan DNA until it finds its consensus sequence, where it cleaves and resolves the cruciform DNA. The polypeptide is Crossover junction endodeoxyribonuclease RuvC (Rhizobium etli (strain CIAT 652)).